A 502-amino-acid polypeptide reads, in one-letter code: ATP synthase subunit alpha (502 aa).

ATP is bound at residue 169–176 (GDRATGKT).

The protein belongs to the ATPase alpha/beta chains family. As to quaternary structure, F-type ATPases have 2 components, CF(1) - the catalytic core - and CF(0) - the membrane proton channel. CF(1) has five subunits: alpha(3), beta(3), gamma(1), delta(1), epsilon(1). CF(0) has three main subunits: a(1), b(2) and c(9-12). The alpha and beta chains form an alternating ring which encloses part of the gamma chain. CF(1) is attached to CF(0) by a central stalk formed by the gamma and epsilon chains, while a peripheral stalk is formed by the delta and b chains.

The protein resides in the cell inner membrane. The enzyme catalyses ATP + H2O + 4 H(+)(in) = ADP + phosphate + 5 H(+)(out). Produces ATP from ADP in the presence of a proton gradient across the membrane. The alpha chain is a regulatory subunit. This is ATP synthase subunit alpha from Hydrogenobaculum sp. (strain Y04AAS1).